The primary structure comprises 367 residues: Isocitrate dehydrogenase [NAD] regulatory subunit 2, mitochondrial (367 aa).

A mitochondrion-targeting transit peptide spans 1-25 (MSRQSFSLLKNLRSIASGSKIQTRS).

It belongs to the isocitrate and isopropylmalate dehydrogenases family. In terms of assembly, heterooligomer of catalytic and regulatory subunits. In terms of tissue distribution, ubiquitous. Predominantly expressed in roots, stems and leaves.

It localises to the mitochondrion. In terms of biological role, performs an essential role in the oxidative function of the citric acid cycle. The chain is Isocitrate dehydrogenase [NAD] regulatory subunit 2, mitochondrial (IDH2) from Arabidopsis thaliana (Mouse-ear cress).